Here is a 96-residue protein sequence, read N- to C-terminus: Co-chaperonin GroES (96 aa).

Belongs to the GroES chaperonin family. As to quaternary structure, heptamer of 7 subunits arranged in a ring. Interacts with the chaperonin GroEL.

The protein resides in the cytoplasm. Its function is as follows. Together with the chaperonin GroEL, plays an essential role in assisting protein folding. The GroEL-GroES system forms a nano-cage that allows encapsulation of the non-native substrate proteins and provides a physical environment optimized to promote and accelerate protein folding. GroES binds to the apical surface of the GroEL ring, thereby capping the opening of the GroEL channel. The chain is Co-chaperonin GroES from Neisseria meningitidis serogroup B (strain ATCC BAA-335 / MC58).